A 233-amino-acid polypeptide reads, in one-letter code: Large ribosomal subunit protein uL3 (233 aa).

The protein belongs to the universal ribosomal protein uL3 family. Part of the 50S ribosomal subunit. Forms a cluster with proteins L14 and L19.

Its function is as follows. One of the primary rRNA binding proteins, it binds directly near the 3'-end of the 23S rRNA, where it nucleates assembly of the 50S subunit. The sequence is that of Large ribosomal subunit protein uL3 from Ureaplasma parvum serovar 3 (strain ATCC 27815 / 27 / NCTC 11736).